Reading from the N-terminus, the 383-residue chain is Putative glutamate--cysteine ligase 2 (383 aa).

Belongs to the glutamate--cysteine ligase type 2 family. YbdK subfamily.

The catalysed reaction is L-cysteine + L-glutamate + ATP = gamma-L-glutamyl-L-cysteine + ADP + phosphate + H(+). ATP-dependent carboxylate-amine ligase which exhibits weak glutamate--cysteine ligase activity. The polypeptide is Putative glutamate--cysteine ligase 2 (Clavibacter sepedonicus (Clavibacter michiganensis subsp. sepedonicus)).